A 361-amino-acid chain; its full sequence is Ataxin-3 (361 aa).

Methionine 1 is covalently cross-linked (Peptide (Met-Gly) (interchain with G-Cter in ubiquitin)). The Josephin domain maps to 1 to 180 (MESIFHEKQE…DCEADQLLQM (180 aa)). Cysteine 14 (nucleophile) is an active-site residue. Catalysis depends on histidine 119, which acts as the Proton acceptor. The active site involves asparagine 134. Lysine 200 participates in a covalent cross-link: Glycyl lysine isopeptide (Lys-Gly) (interchain with G-Cter in ubiquitin). A Phosphoserine modification is found at serine 219. UIM domains lie at 224-243 (EDEE…IDME) and 244-263 (DEEA…SSRN). A compositionally biased stretch (polar residues) spans 258–278 (QGSSRNISQDMTQTSGTNLTS). The disordered stretch occupies residues 258–338 (QGSSRNISQD…DLGDAMSEED (81 aa)). Serine 265 and serine 272 each carry phosphoserine. Basic and acidic residues predominate over residues 279-293 (EELRKRREAYFEKQQ). Residues 294–305 (QKQQQQQQQQQQ) show a composition bias toward low complexity. Residues 306–325 (GDLSGQSSHPCERPATSSGA) show a composition bias toward polar residues. Serine 328 is modified (phosphoserine). Residues 331-349 (GDAMSEEDMLQAAVTMSLE) form the UIM 3 domain.

Interacts with STUB1/CHIP (when monoubiquitinated). Interacts with DNA repair proteins RAD23A and RAD23B. Interacts with BECN1 (via its poly-Gln domain). Interacts with PRKN, UBR2, VCP and tubulin. Short isoform 1 interacts with CASP7. Monoubiquitinated N-terminally by UBE2W, possibly leading to activate the deubiquitinating enzyme activity. In terms of tissue distribution, ubiquitous.

It is found in the nucleus matrix. It localises to the nucleus. The protein resides in the lysosome membrane. It catalyses the reaction Thiol-dependent hydrolysis of ester, thioester, amide, peptide and isopeptide bonds formed by the C-terminal Gly of ubiquitin (a 76-residue protein attached to proteins as an intracellular targeting signal).. Its function is as follows. Deubiquitinating enzyme involved in protein homeostasis maintenance, transcription, cytoskeleton regulation, myogenesis and degradation of misfolded chaperone substrates. Binds long polyubiquitin chains and trims them, while it has weak or no activity against chains of 4 or less ubiquitins. Involved in degradation of misfolded chaperone substrates via its interaction with STUB1/CHIP: recruited to monoubiquitinated STUB1/CHIP, and restricts the length of ubiquitin chain attached to STUB1/CHIP substrates and preventing further chain extension. Interacts with key regulators of transcription and represses transcription: acts as a histone-binding protein that regulates transcription. Acts as a negative regulator of mTORC1 signaling in response to amino acid deprivation by mediating deubiquitination of RHEB, thereby promoting RHEB inactivation by the TSC-TBC complex. Regulates autophagy via the deubiquitination of 'Lys-402' of BECN1 leading to the stabilization of BECN1. The sequence is that of Ataxin-3 from Homo sapiens (Human).